Here is a 175-residue protein sequence, read N- to C-terminus: RNA pyrophosphohydrolase (175 aa).

Residues 7–150 (GYRLNVGIIL…KRQVYIQALK (144 aa)) enclose the Nudix hydrolase domain. Residues 39–60 (GGLAPGETAMQAMYRELHEEVG) carry the Nudix box motif.

The protein belongs to the Nudix hydrolase family. RppH subfamily. It depends on a divalent metal cation as a cofactor.

Accelerates the degradation of transcripts by removing pyrophosphate from the 5'-end of triphosphorylated RNA, leading to a more labile monophosphorylated state that can stimulate subsequent ribonuclease cleavage. The protein is RNA pyrophosphohydrolase of Legionella pneumophila (strain Paris).